The primary structure comprises 579 residues: Nif-specific regulatory protein (579 aa).

The GAF domain occupies 40–187 (DPVAEVPQIF…MVASLLEQAL (148 aa)). Positions 226–454 (IVGSSPAIAE…LENCVNRAAA (229 aa)) constitute a Sigma-54 factor interaction domain. ATP contacts are provided by residues 254–261 (GESGTGKE) and 317–326 (ADGGTLFLDE). The segment at 464-536 (EELACRQGAC…PLRTKTAQLS (73 aa)) is inter-domain linker. Cys-468 and Cys-473 together coordinate a divalent metal cation. The interval 502–529 (RVSAPPPEPAPAPEPAPEAPPREEVPLR) is disordered. Repeat copies occupy residues 505-506 (AP), 507-508 (PP), 509-510 (EP), 511-512 (AP), 513-514 (AP), 515-516 (EP), and 517-518 (AP). Residues 505–518 (APPPEPAPAPEPAP) form a 7 X 2 AA tandem repeats of X-P region. The span at 505–520 (APPPEPAPAPEPAPEA) shows a compositional bias: pro residues. A C-terminal DNA-binding domain region spans residues 537–579 (REELLRALESAGWVQAKAARLLGMTPRQIAYALQKFEIELRKI). The segment at residues 551–570 (QAKAARLLGMTPRQIAYALQ) is a DNA-binding region (H-T-H motif).

As to quaternary structure, interacts with sigma-54.

Functionally, required for activation of most nif operons, which are directly involved in nitrogen fixation. This is Nif-specific regulatory protein (nifA1) from Rhodobacter capsulatus (strain ATCC BAA-309 / NBRC 16581 / SB1003).